A 310-amino-acid polypeptide reads, in one-letter code: Methionyl-tRNA formyltransferase (310 aa).

(6S)-5,6,7,8-tetrahydrofolate is bound at residue 109–112; sequence SLLP.

This sequence belongs to the Fmt family.

It carries out the reaction L-methionyl-tRNA(fMet) + (6R)-10-formyltetrahydrofolate = N-formyl-L-methionyl-tRNA(fMet) + (6S)-5,6,7,8-tetrahydrofolate + H(+). Attaches a formyl group to the free amino group of methionyl-tRNA(fMet). The formyl group appears to play a dual role in the initiator identity of N-formylmethionyl-tRNA by promoting its recognition by IF2 and preventing the misappropriation of this tRNA by the elongation apparatus. The protein is Methionyl-tRNA formyltransferase of Pseudomonas putida (strain GB-1).